The chain runs to 164 residues: R-phycoerythrin alpha chain (164 aa).

(2R,3E)-phycoerythrobilin-binding residues include cysteine 82 and cysteine 139.

The protein belongs to the phycobiliprotein family. Heterodimer of an alpha and a beta chain. Post-translationally, contains two covalently linked bilin chromophores.

The protein resides in the plastid. It localises to the chloroplast thylakoid membrane. In terms of biological role, light-harvesting photosynthetic bile pigment-protein from the phycobiliprotein complex. This Pyropia tenera (Nori) protein is R-phycoerythrin alpha chain (cpeA).